The chain runs to 295 residues: Ankyrin repeat and SOCS box protein 17 (295 aa).

One copy of the ANK repeat lies at 146-176 (SGITPLFYVAQTRQSNIFKILLQYGILEREK). In terms of domain architecture, SOCS box spans 232-295 (LGRHPIISNW…RLQNYLNLEI (64 aa)).

The protein belongs to the ankyrin SOCS box (ASB) family. Specifically expressed in testis. Not detected in other tissues tested.

It functions in the pathway protein modification; protein ubiquitination. Its function is as follows. May be a substrate-recognition component of a SCF-like ECS (Elongin-Cullin-SOCS-box protein) E3 ubiquitin-protein ligase complex which mediates the ubiquitination and subsequent proteasomal degradation of target proteins. The chain is Ankyrin repeat and SOCS box protein 17 (ASB17) from Homo sapiens (Human).